We begin with the raw amino-acid sequence, 373 residues long: Cobalt-precorrin-5B C(1)-methyltransferase (373 aa).

The protein belongs to the CbiD family.

The catalysed reaction is Co-precorrin-5B + S-adenosyl-L-methionine = Co-precorrin-6A + S-adenosyl-L-homocysteine. Its pathway is cofactor biosynthesis; adenosylcobalamin biosynthesis; cob(II)yrinate a,c-diamide from sirohydrochlorin (anaerobic route): step 6/10. In terms of biological role, catalyzes the methylation of C-1 in cobalt-precorrin-5B to form cobalt-precorrin-6A. This chain is Cobalt-precorrin-5B C(1)-methyltransferase, found in Halorhodospira halophila (strain DSM 244 / SL1) (Ectothiorhodospira halophila (strain DSM 244 / SL1)).